Here is a 243-residue protein sequence, read N- to C-terminus: Glucosamine-6-phosphate deaminase (243 aa).

D67 functions as the Proton acceptor; for enolization step in the catalytic mechanism. The active-site For ring-opening step is the N137. H139 serves as the catalytic Proton acceptor; for ring-opening step. Residue E144 is the For ring-opening step of the active site.

The protein belongs to the glucosamine/galactosamine-6-phosphate isomerase family. NagB subfamily.

It carries out the reaction alpha-D-glucosamine 6-phosphate + H2O = beta-D-fructose 6-phosphate + NH4(+). The protein operates within amino-sugar metabolism; N-acetylneuraminate degradation; D-fructose 6-phosphate from N-acetylneuraminate: step 5/5. Catalyzes the reversible isomerization-deamination of glucosamine 6-phosphate (GlcN6P) to form fructose 6-phosphate (Fru6P) and ammonium ion. The protein is Glucosamine-6-phosphate deaminase of Staphylococcus epidermidis (strain ATCC 12228 / FDA PCI 1200).